Consider the following 352-residue polypeptide: Lipase chaperone (352 aa).

Residues 7-28 (LSLVAVVVAGGLTLYWRWPAAV) traverse the membrane as a helical segment.

It belongs to the lipase chaperone family.

The protein resides in the cell inner membrane. May be involved in the folding of the extracellular lipase during its passage through the periplasm. The protein is Lipase chaperone (lifO) of Pseudomonas wisconsinensis.